Consider the following 320-residue polypeptide: MRQTKTGILLANLGTPDAPTPEAVKRYLKQFLSDRRVVDTSRLLWWPLLRGVILPLRSPRVAKLYASVWMEGGSPLMVYSRQQQQALAQRLPETPVALGMSYGSPSLESAVDELLAEHVDHIVVLPLYPQFSCSTVGAVWDELARILARKRSIPGISFIRDYADNHDYINALANSVRASFAKHGEPDLLLLSYHGIPQRYADEGDDYPQRCRTTTRELASALGMAPEKVMMTFQSRFGREPWLMPYTDETLKMLGEKGVGHIQVMCPGFAADCLETLEEIAEQNREVFLGAGGKKYEYIPALNATPEYIEMMANLVAAYR.

Positions 194 and 275 each coordinate Fe cation.

Belongs to the ferrochelatase family. In terms of assembly, monomer.

The protein localises to the cytoplasm. The enzyme catalyses heme b + 2 H(+) = protoporphyrin IX + Fe(2+). It participates in porphyrin-containing compound metabolism; protoheme biosynthesis; protoheme from protoporphyrin-IX: step 1/1. Functionally, catalyzes the ferrous insertion into protoporphyrin IX. This chain is Ferrochelatase, found in Shigella boydii serotype 4 (strain Sb227).